Consider the following 350-residue polypeptide: Anthranilate phosphoribosyltransferase (350 aa).

Residues glycine 93, glycine 96 to aspartate 97, threonine 101, asparagine 103 to threonine 106, lysine 121 to glycine 129, and serine 133 contribute to the 5-phospho-alpha-D-ribose 1-diphosphate site. Residue glycine 93 coordinates anthranilate. Mg(2+) is bound at residue serine 105. Residue asparagine 124 participates in anthranilate binding. Arginine 179 lines the anthranilate pocket. The Mg(2+) site is built by aspartate 238 and glutamate 239.

The protein belongs to the anthranilate phosphoribosyltransferase family. Homodimer. Mg(2+) is required as a cofactor.

The enzyme catalyses N-(5-phospho-beta-D-ribosyl)anthranilate + diphosphate = 5-phospho-alpha-D-ribose 1-diphosphate + anthranilate. Its pathway is amino-acid biosynthesis; L-tryptophan biosynthesis; L-tryptophan from chorismate: step 2/5. Functionally, catalyzes the transfer of the phosphoribosyl group of 5-phosphorylribose-1-pyrophosphate (PRPP) to anthranilate to yield N-(5'-phosphoribosyl)-anthranilate (PRA). The protein is Anthranilate phosphoribosyltransferase of Parasynechococcus marenigrum (strain WH8102).